Consider the following 246-residue polypeptide: Alpha-amylase inhibitor 1 (246 aa).

The N-terminal stretch at 1-23 is a signal peptide; the sequence is MIMASSKLLSLALFLALLSHANS. N-linked (GlcNAc...) asparagine glycans are attached at residues asparagine 35, asparagine 88, and asparagine 163. Residues 240–246 constitute a propeptide that is removed on maturation; sequence IVLNKIL.

Belongs to the leguminous lectin family. Heterodimer of chain 1 and chain 2. Proteolytic processing yields active form.

In terms of biological role, lectin and alpha-amylase inhibitor. Acts as a defensive protein against insects. This is Alpha-amylase inhibitor 1 (LLP) from Phaseolus vulgaris (Kidney bean).